The primary structure comprises 190 residues: Small ribosomal subunit protein uS5 (190 aa).

The region spanning 21 to 84 (FADRLVAINR…EQAKRQMIRV (64 aa)) is the S5 DRBM domain. The tract at residues 156–190 (KKEQSPRSVAQRRGKKVADILPKRDEAPAAEAAEA) is disordered. Basic and acidic residues predominate over residues 171-182 (KVADILPKRDEA).

It belongs to the universal ribosomal protein uS5 family. Part of the 30S ribosomal subunit. Contacts proteins S4 and S8.

In terms of biological role, with S4 and S12 plays an important role in translational accuracy. Its function is as follows. Located at the back of the 30S subunit body where it stabilizes the conformation of the head with respect to the body. The protein is Small ribosomal subunit protein uS5 of Ruegeria pomeroyi (strain ATCC 700808 / DSM 15171 / DSS-3) (Silicibacter pomeroyi).